Consider the following 133-residue polypeptide: UPF0102 protein Plav_3586 (133 aa).

Belongs to the UPF0102 family.

The protein is UPF0102 protein Plav_3586 of Parvibaculum lavamentivorans (strain DS-1 / DSM 13023 / NCIMB 13966).